The following is a 623-amino-acid chain: DNA polymerase alpha subunit B (623 aa).

Positions 113-151 (IPKIKDEPSSSVDVSTARNKNNHNNNNNNNPSLPNKSMF) are disordered. Polar residues predominate over residues 121–130 (SSSVDVSTAR).

This sequence belongs to the DNA polymerase alpha subunit B family. DNA polymerase alpha:primase is a four subunit enzyme complex, which is assembled throughout the cell cycle, and consists of the two DNA polymerase subunits A and B, and the DNA primase large and small subunits. Subunit B binds to subunit A.

The protein localises to the nucleus. Functionally, may play an essential role at the early stage of chromosomal DNA replication by coupling the polymerase alpha/primase complex to the cellular replication machinery. This Dictyostelium discoideum (Social amoeba) protein is DNA polymerase alpha subunit B (polA2).